Here is a 458-residue protein sequence, read N- to C-terminus: Light-independent protochlorophyllide reductase subunit N (458 aa).

Residues cysteine 22, cysteine 47, and cysteine 107 each coordinate [4Fe-4S] cluster.

It belongs to the BchN/ChlN family. As to quaternary structure, protochlorophyllide reductase is composed of three subunits; ChlL, ChlN and ChlB. Forms a heterotetramer of two ChlB and two ChlN subunits. The cofactor is [4Fe-4S] cluster.

The protein localises to the plastid. The protein resides in the chloroplast. It catalyses the reaction chlorophyllide a + oxidized 2[4Fe-4S]-[ferredoxin] + 2 ADP + 2 phosphate = protochlorophyllide a + reduced 2[4Fe-4S]-[ferredoxin] + 2 ATP + 2 H2O. Its pathway is porphyrin-containing compound metabolism; chlorophyll biosynthesis (light-independent). Functionally, component of the dark-operative protochlorophyllide reductase (DPOR) that uses Mg-ATP and reduced ferredoxin to reduce ring D of protochlorophyllide (Pchlide) to form chlorophyllide a (Chlide). This reaction is light-independent. The NB-protein (ChlN-ChlB) is the catalytic component of the complex. This is Light-independent protochlorophyllide reductase subunit N from Chaetosphaeridium globosum (Charophycean green alga).